The following is a 305-amino-acid chain: Fructose-bisphosphate aldolase (305 aa).

Residue S49 participates in D-glyceraldehyde 3-phosphate binding. D80 (proton donor) is an active-site residue. The Zn(2+) site is built by H81, D102, E132, and H178. G179 provides a ligand contact to dihydroxyacetone phosphate. Residue H208 participates in Zn(2+) binding. Residues G209–S211 and N251–T254 each bind dihydroxyacetone phosphate.

Belongs to the class II fructose-bisphosphate aldolase family. In terms of assembly, homotetramer. Requires Zn(2+) as cofactor.

The catalysed reaction is beta-D-fructose 1,6-bisphosphate = D-glyceraldehyde 3-phosphate + dihydroxyacetone phosphate. Its pathway is carbohydrate degradation; glycolysis; D-glyceraldehyde 3-phosphate and glycerone phosphate from D-glucose: step 4/4. Functionally, catalyzes the aldol condensation of dihydroxyacetone phosphate (DHAP or glycerone-phosphate) with glyceraldehyde 3-phosphate (G3P) to form fructose 1,6-bisphosphate (FBP) in gluconeogenesis and the reverse reaction in glycolysis. The protein is Fructose-bisphosphate aldolase of Thermus caldophilus.